The following is a 241-amino-acid chain: 2,3,4,5-tetrahydropyridine-2,6-dicarboxylate N-acetyltransferase (241 aa).

This sequence belongs to the transferase hexapeptide repeat family. DapH subfamily.

The catalysed reaction is (S)-2,3,4,5-tetrahydrodipicolinate + acetyl-CoA + H2O = L-2-acetamido-6-oxoheptanedioate + CoA. The protein operates within amino-acid biosynthesis; L-lysine biosynthesis via DAP pathway; LL-2,6-diaminopimelate from (S)-tetrahydrodipicolinate (acetylase route): step 1/3. In terms of biological role, catalyzes the transfer of an acetyl group from acetyl-CoA to tetrahydrodipicolinate. The chain is 2,3,4,5-tetrahydropyridine-2,6-dicarboxylate N-acetyltransferase from Thermoanaerobacter pseudethanolicus (strain ATCC 33223 / 39E) (Clostridium thermohydrosulfuricum).